Consider the following 338-residue polypeptide: Mas-related G-protein coupled receptor member B2 (338 aa).

The Extracellular portion of the chain corresponds to 1–40; it reads MSGDFLIKNLSTSAWKTNITVLNGSYYIDTSVCVTRNQAM. 3 N-linked (GlcNAc...) asparagine glycosylation sites follow: N9, N18, and N23. The helical transmembrane segment at 41-61 threads the bilayer; that stretch reads ILLSIIISLVGMGLNAIVLWF. The Cytoplasmic segment spans residues 62 to 89; that stretch reads LGIRMHTNAFTVYILNLAMADFLYLCSQ. The helical transmembrane segment at 90–110 threads the bilayer; it reads FVICLLIAFYIFYSIDINIPL. V111 is a topological domain (extracellular). Residues 112–132 form a helical membrane-spanning segment; it reads LYVVPIFAYLSGLSILSTISI. The Cytoplasmic portion of the chain corresponds to 133 to 157; sequence ERCLSVIWPIWYRCKRPRHTSAITC. A helical membrane pass occupies residues 158-178; sequence FVLWVMSLLLGLLEGKACGLL. At 179-191 the chain is on the extracellular side; that stretch reads FNSFDSYWCETFD. Residues 192–212 traverse the membrane as a helical segment; sequence VITNIWSVVFFGVLCGSSLTL. The Cytoplasmic portion of the chain corresponds to 213–231; sequence LVRIFCGSQRIPMTRLYVT. Residues 232-252 form a helical membrane-spanning segment; it reads ITLTVLVFLIFGLPFGIYWIL. Over 253-268 the chain is Extracellular; it reads YQWISNFYYVEICNFY. The helical transmembrane segment at 269–289 threads the bilayer; the sequence is LEILFLSCVNSCMNPIIYFLV. Topologically, residues 290 to 338 are cytoplasmic; sequence GSIRHRRFRRKTLKLLLQRAMQDTPEEEQSGNKSSSEHPEELETVQSCS. The disordered stretch occupies residues 310–338; sequence MQDTPEEEQSGNKSSSEHPEELETVQSCS.

It belongs to the G-protein coupled receptor 1 family. Mas subfamily. In terms of tissue distribution, mast cell-specific.

It is found in the cell membrane. Mast cell-specific receptor for basic secretagogues, i.e. cationic amphiphilic drugs, as well as endo- or exogenous peptides, consisting of a basic head group and a hydrophobic core. Recognizes and binds small molecules containing a cyclized tetrahydroisoquinoline (THIQ), such as non-steroidal neuromuscular blocking drugs (NMBDs), including tubocurarine and atracurium. In response to these compounds, mediates pseudo-allergic reactions characterized by histamine release, inflammation and airway contraction. In Mus musculus (Mouse), this protein is Mas-related G-protein coupled receptor member B2 (Mrgprb2).